Consider the following 354-residue polypeptide: Photosystem II protein D1 1 (354 aa).

A run of 3 helical transmembrane segments spans residues 29 to 46, 118 to 133, and 142 to 156; these read YIGW…TATT, HFLI…EWEL, and WIAV…AATA. Chlorophyll a is bound at residue His118. Tyr126 contacts pheophytin a. Positions 170 and 189 each coordinate [CaMn4O5] cluster. Residues 197-218 form a helical membrane-spanning segment; the sequence is FHQLGVAGVFGGALFSAMHGSL. A chlorophyll a-binding site is contributed by His198. Residues His215 and 264–265 each bind a quinone; that span reads SF. Residue His215 coordinates Fe cation. Position 272 (His272) interacts with Fe cation. A helical transmembrane segment spans residues 274–288; that stretch reads FLAAWPVIGIWFTAL. His332, Glu333, Asp342, and Ala344 together coordinate [CaMn4O5] cluster. Residues 345-354 constitute a propeptide that is removed on maturation; the sequence is AVEVAPAIRG.

It belongs to the reaction center PufL/M/PsbA/D family. In terms of assembly, PSII is composed of 1 copy each of membrane proteins PsbA, PsbB, PsbC, PsbD, PsbE, PsbF, PsbH, PsbI, PsbJ, PsbK, PsbL, PsbM, PsbT, PsbX, PsbY, PsbZ, Psb30/Ycf12, peripheral proteins PsbO, CyanoQ (PsbQ), PsbU, PsbV and a large number of cofactors. It forms dimeric complexes. The D1/D2 heterodimer binds P680, chlorophylls that are the primary electron donor of PSII, and subsequent electron acceptors. It shares a non-heme iron and each subunit binds pheophytin, quinone, additional chlorophylls, carotenoids and lipids. D1 provides most of the ligands for the Mn4-Ca-O5 cluster of the oxygen-evolving complex (OEC). There is also a Cl(-1) ion associated with D1 and D2, which is required for oxygen evolution. The PSII complex binds additional chlorophylls, carotenoids and specific lipids. serves as cofactor. In terms of processing, tyr-161 forms a radical intermediate that is referred to as redox-active TyrZ, YZ or Y-Z. C-terminally processed by CtpA; processing is essential to allow assembly of the oxygen-evolving complex and thus photosynthetic growth.

Its subcellular location is the cellular thylakoid membrane. It catalyses the reaction 2 a plastoquinone + 4 hnu + 2 H2O = 2 a plastoquinol + O2. In terms of biological role, photosystem II (PSII) is a light-driven water:plastoquinone oxidoreductase that uses light energy to abstract electrons from H(2)O, generating O(2) and a proton gradient subsequently used for ATP formation. It consists of a core antenna complex that captures photons, and an electron transfer chain that converts photonic excitation into a charge separation. The D1/D2 (PsbA/PsbD) reaction center heterodimer binds P680, the primary electron donor of PSII as well as several subsequent electron acceptors. In Synechococcus sp. (strain JA-3-3Ab) (Cyanobacteria bacterium Yellowstone A-Prime), this protein is Photosystem II protein D1 1.